The chain runs to 475 residues: Ribulose bisphosphate carboxylase large chain (475 aa).

The propeptide occupies Met1–Ser2. Pro3 bears the N-acetylproline mark. Residue Lys14 is modified to N6,N6,N6-trimethyllysine. Asn123 and Thr173 together coordinate substrate. Lys175 acts as the Proton acceptor in catalysis. Lys177 contributes to the substrate binding site. Mg(2+)-binding residues include Lys201, Asp203, and Glu204. N6-carboxylysine is present on Lys201. The Proton acceptor role is filled by His294. 3 residues coordinate substrate: Arg295, His327, and Ser379.

It belongs to the RuBisCO large chain family. Type I subfamily. As to quaternary structure, heterohexadecamer of 8 large chains and 8 small chains; disulfide-linked. The disulfide link is formed within the large subunit homodimers. It depends on Mg(2+) as a cofactor. The disulfide bond which can form in the large chain dimeric partners within the hexadecamer appears to be associated with oxidative stress and protein turnover.

It is found in the plastid. The protein resides in the chloroplast. The enzyme catalyses 2 (2R)-3-phosphoglycerate + 2 H(+) = D-ribulose 1,5-bisphosphate + CO2 + H2O. The catalysed reaction is D-ribulose 1,5-bisphosphate + O2 = 2-phosphoglycolate + (2R)-3-phosphoglycerate + 2 H(+). Its function is as follows. RuBisCO catalyzes two reactions: the carboxylation of D-ribulose 1,5-bisphosphate, the primary event in carbon dioxide fixation, as well as the oxidative fragmentation of the pentose substrate in the photorespiration process. Both reactions occur simultaneously and in competition at the same active site. The sequence is that of Ribulose bisphosphate carboxylase large chain from Clarkia xantiana (Gunsight clarkia).